The chain runs to 439 residues: MREIIHLQTGQCGNQVGCKFWETISGEHGIDQSGRYVGTSDNQLERVNVYYNEASSKKYVPRAVLIDLEPGTMDAVRQGPFGELFRPDNFVFGQSGAGNNWAKGHYTEGAELIDSVMDVVRKEAESSDCLQGFQITHSLGGGTGAGMGTLLLSKIREDFPDRMICTFSVVPSPKVSDTVVEPYNATLSIHQLVENADETFCIDNEALYDMCFRTLKLNNPGYGDLNHLVSLVMSGVTTCLRFPGQLNAYLRKLAVNMIPFPRLHFFVVGFAPLTAVGTQKFKTYSVSELTQQMFDSKNMMTACDPKKGRYLTVAAMFRGKISMKDVDEQMSMVQSKNSSLFVEWIPSNVKTAVCDIAPTGLEMSATFVGNTTSIQELFKRISDQFTVMFRRKAFLHWYTGEGMDEMEFSEAESNMNDLLSEYQQYQDATVEDAEEFLVN.

8 residues coordinate GTP: Gln-11, Glu-69, Ser-138, Gly-142, Thr-143, Gly-144, Asn-204, and Asn-226. Glu-69 is a Mg(2+) binding site.

It belongs to the tubulin family. In terms of assembly, dimer of alpha and beta chains. A typical microtubule is a hollow water-filled tube with an outer diameter of 25 nm and an inner diameter of 15 nM. Alpha-beta heterodimers associate head-to-tail to form protofilaments running lengthwise along the microtubule wall with the beta-tubulin subunit facing the microtubule plus end conferring a structural polarity. Microtubules usually have 13 protofilaments but different protofilament numbers can be found in some organisms and specialized cells. It depends on Mg(2+) as a cofactor.

It is found in the cytoplasm. Its subcellular location is the cytoskeleton. Functionally, tubulin is the major constituent of microtubules, a cylinder consisting of laterally associated linear protofilaments composed of alpha- and beta-tubulin heterodimers. Microtubules grow by the addition of GTP-tubulin dimers to the microtubule end, where a stabilizing cap forms. Below the cap, tubulin dimers are in GDP-bound state, owing to GTPase activity of alpha-tubulin. The sequence is that of Tubulin beta chain (TUB2) from Encephalitozoon intestinalis (Microsporidian parasite).